The sequence spans 393 residues: Prokineticin receptor 1 (393 aa).

The Extracellular segment spans residues 1 to 62 (METTMGFMDD…TNSRTFFAAK (62 aa)). Residues asparagine 11, asparagine 14, and asparagine 36 are each glycosylated (N-linked (GlcNAc...) asparagine). The helical transmembrane segment at 63 to 83 (IVIGMALVGIMLVCGIGNFIF) threads the bilayer. The Cytoplasmic portion of the chain corresponds to 84 to 98 (IAALVRYKKLRNLTN). Residues 99–119 (LLIANLAISDFLVAIVCCPFE) form a helical membrane-spanning segment. Topologically, residues 120-146 (MDYYVVRQLSWEHGHVLCTSVNYLRTV) are extracellular. A disulfide bond links cysteine 137 and cysteine 217. A helical membrane pass occupies residues 147-167 (SLYVSTNALLAIAIDRYLAIV). The Cytoplasmic portion of the chain corresponds to 168–180 (HPLRPRMKCQTAT). The chain crosses the membrane as a helical span at residues 181-201 (GLIALVWTVSILIAIPSAYFT). The Extracellular segment spans residues 202 to 232 (TETVLVIVKSQEKIFCGQIWPVDQQLYYKSY). The helical transmembrane segment at 233–253 (FLFIFGIEFVGPVVTMTLCYA) threads the bilayer. The Cytoplasmic portion of the chain corresponds to 254–282 (RISRELWFKAVPGFQTEQIRKRLRCRRKT). Residues 283 to 303 (VLVLMCILTAYVLCWAPFYGF) traverse the membrane as a helical segment. Residues 304-322 (TIVRDFFPTVFVKEKHYLT) are Extracellular-facing. A helical transmembrane segment spans residues 323–343 (AFYIVECIAMSNSMINTLCFV). Over 344–393 (TVKNDTVKYFKKIMLLHWKASYNGGKSSADLDLKTIGMPATEEVDCIRLK) the chain is Cytoplasmic.

The protein belongs to the G-protein coupled receptor 1 family. Localizes to glandular epithelium, stroma and vascular endothelial cells of first trimester decidua (at protein level). Up-regulated in first trimester decidua when compared with non-pregnant endometrium. Expressed in the stomach, throughout the small intestine, colon, rectum, thyroid gland, pituitary gland, salivary gland, adrenal gland, testis, ovary, brain, spleen, prostate and pancreas.

The protein localises to the cell membrane. Receptor for prokineticin 1. Exclusively coupled to the G(q) subclass of heteromeric G proteins. Activation leads to mobilization of calcium, stimulation of phosphoinositide turnover and activation of p44/p42 mitogen-activated protein kinase. May play a role during early pregnancy. This chain is Prokineticin receptor 1 (PROKR1), found in Homo sapiens (Human).